Consider the following 846-residue polypeptide: Leucine--tRNA ligase (846 aa).

The 'HIGH' region signature appears at 42-52 (PYPSGNLHMGH). The 'KMSKS' region motif lies at 586-590 (KMSKS). Lys-589 provides a ligand contact to ATP.

The protein belongs to the class-I aminoacyl-tRNA synthetase family.

It is found in the cytoplasm. The enzyme catalyses tRNA(Leu) + L-leucine + ATP = L-leucyl-tRNA(Leu) + AMP + diphosphate. This Heliobacterium modesticaldum (strain ATCC 51547 / Ice1) protein is Leucine--tRNA ligase.